Consider the following 274-residue polypeptide: Thiamine kinase (274 aa).

Belongs to the thiamine kinase family.

It carries out the reaction thiamine + ATP = thiamine phosphate + ADP + H(+). Its pathway is cofactor biosynthesis; thiamine diphosphate biosynthesis; thiamine phosphate from thiamine: step 1/1. In terms of biological role, catalyzes the ATP-dependent phosphorylation of thiamine to thiamine phosphate. Is involved in thiamine salvage. The chain is Thiamine kinase from Salmonella heidelberg (strain SL476).